The sequence spans 427 residues: Adenylosuccinate synthetase (427 aa).

Residues 12 to 18 (GDEGKGK) and 40 to 42 (GHT) contribute to the GTP site. Residue Asp13 is the Proton acceptor of the active site. Mg(2+)-binding residues include Asp13 and Gly40. Residues 13–16 (DEGK), 38–41 (NAGH), Thr128, Arg142, Gln223, Thr238, and Arg302 each bind IMP. The Proton donor role is filled by His41. 298 to 304 (TTTGRPR) contributes to the substrate binding site. GTP contacts are provided by residues Arg304, 330–332 (KLD), and 412–414 (AVG).

Belongs to the adenylosuccinate synthetase family. Homodimer. Mg(2+) is required as a cofactor.

It localises to the cytoplasm. The enzyme catalyses IMP + L-aspartate + GTP = N(6)-(1,2-dicarboxyethyl)-AMP + GDP + phosphate + 2 H(+). The protein operates within purine metabolism; AMP biosynthesis via de novo pathway; AMP from IMP: step 1/2. Plays an important role in the de novo pathway of purine nucleotide biosynthesis. Catalyzes the first committed step in the biosynthesis of AMP from IMP. In Moorella thermoacetica (strain ATCC 39073 / JCM 9320), this protein is Adenylosuccinate synthetase.